Here is a 213-residue protein sequence, read N- to C-terminus: Nicolin-1 (213 aa).

In terms of assembly, part of the neuronal tubulin polyglutamylase complex which contains TPGS1, TPGS2, TTLL1, LRRC49 and NICN1. In terms of tissue distribution, high expression level is found in brain, testis, liver and kidney. Weak expression in spleen, leukocytes, small intestin and colon.

It localises to the nucleus. In Mus musculus (Mouse), this protein is Nicolin-1 (Nicn1).